We begin with the raw amino-acid sequence, 714 residues long: Calpain-1 catalytic subunit (714 aa).

In terms of domain architecture, Calpain catalytic spans 55–354; the sequence is LFRDEAFPPV…FTRLEICNLT (300 aa). Ca(2+)-binding residues include Gln-109 and Asp-114. Residues Cys-115, His-272, and Asn-296 contribute to the active site. Ca(2+) is bound by residues Asn-316, Asp-318, and Asp-323. A Phosphothreonine modification is found at Thr-354. The segment at 355-526 is domain III; it reads PDALKSRTIR…KSAGTAELDD (172 aa). A linker region spans residues 527-542; that stretch reads QIQANLPDEQVLSEEE. EF-hand domains are found at residues 541–576, 585–618, 615–650, and 680–714; these read EEID…IISK, FSLE…NRIR, NRIR…AGFK, and VRLE…TMFA. The segment at 543–713 is domain IV; the sequence is IDENFKALFR…LFKWLQLTMF (171 aa). Asp-598, Asp-600, Asn-602, Lys-604, Glu-609, Asp-628, Asp-630, Ser-632, Ser-634, and Glu-639 together coordinate Ca(2+).

It belongs to the peptidase C2 family. As to quaternary structure, forms a heterodimer with a small (regulatory) subunit CAPNS1. Requires Ca(2+) as cofactor. Undergoes calcium-induced successive autoproteolytic cleavages that generate a membrane-bound 78 kDa active form and an intracellular 75 kDa active form. Calpastatin reduces with high efficiency the transition from 78 kDa to 75 kDa calpain forms.

It localises to the cytoplasm. The protein resides in the cell membrane. The enzyme catalyses Broad endopeptidase specificity.. With respect to regulation, activated by micromolar concentrations of calcium and inhibited by calpastatin. Calcium-regulated non-lysosomal thiol-protease which catalyzes limited proteolysis of substrates involved in cytoskeletal remodeling and signal transduction. Proteolytically cleaves CTBP1. Cleaves and activates caspase-7 (CASP7). This is Calpain-1 catalytic subunit from Pongo abelii (Sumatran orangutan).